Here is a 339-residue protein sequence, read N- to C-terminus: Serine/threonine-protein kinase SRK2J (339 aa).

The 257-residue stretch at 4–260 (YEMVKDLGFG…LKEIKSHAWF (257 aa)) folds into the Protein kinase domain. ATP is bound by residues 10–18 (LGFGNFGLA) and K33. The Proton acceptor role is filled by D123. The tract at residues 308–339 (SRPVESLGSDKKDDDEEEYLDANDEEWYDDYA) is disordered. Residues 320–339 (DDDEEEYLDANDEEWYDDYA) show a composition bias toward acidic residues.

The protein belongs to the protein kinase superfamily. Ser/Thr protein kinase family. As to expression, expressed in seedlings.

It catalyses the reaction L-seryl-[protein] + ATP = O-phospho-L-seryl-[protein] + ADP + H(+). The catalysed reaction is L-threonyl-[protein] + ATP = O-phospho-L-threonyl-[protein] + ADP + H(+). In Arabidopsis thaliana (Mouse-ear cress), this protein is Serine/threonine-protein kinase SRK2J (SRK2J).